Here is a 479-residue protein sequence, read N- to C-terminus: UDP-glycosyltransferase 84A3 (479 aa).

His-19 functions as the Proton acceptor in the catalytic mechanism. His-19 is a binding site for an anthocyanidin. Gln-346, His-361, Trp-364, Asn-365, Ser-366, and Glu-369 together coordinate UDP-alpha-D-glucose. Gly-384 contributes to the an anthocyanidin binding site. 2 residues coordinate UDP-alpha-D-glucose: Asp-385 and Gln-386.

It belongs to the UDP-glycosyltransferase family.

It carries out the reaction (E)-4-coumarate + UDP-alpha-D-glucose = 4-O-(beta-D-glucosyl)-trans-4-coumarate + UDP + H(+). The enzyme catalyses (E)-ferulate + UDP-alpha-D-glucose = 1-O-[(E)-feruloyl]-beta-D-glucose + UDP. The catalysed reaction is (E)-caffeate + UDP-alpha-D-glucose = 1-O-[(E)-caffeoyl]-beta-D-glucose + UDP. It catalyses the reaction (E)-sinapate + UDP-alpha-D-glucose = 1-O-(trans-sinapoyl)-beta-D-glucose + UDP. It carries out the reaction (E)-cinnamate + UDP-alpha-D-glucose = 1-O-(trans-cinnamoyl)-beta-D-glucose + UDP. Functionally, UDP-glucosyltransferase that forms glucose esters with phenylpropanoids. Glucosylates 4-coumarate, ferulate, caffeate, sinapate and cinnamate. The sequence is that of UDP-glycosyltransferase 84A3 from Arabidopsis thaliana (Mouse-ear cress).